The following is a 484-amino-acid chain: Serine protease HTR4 (484 aa).

The first 28 residues, 1–28 (MARPLQRPAGLGPFVLLWLLLPAPSGRG), serve as a signal peptide directing secretion. In terms of domain architecture, IGFBP N-terminal spans 36–114 (PVPRCPAACE…GRPLGTCGCP (79 aa)). Intrachain disulfides connect Cys40/Cys66, Cys44/Cys68, Cys49/Cys69, Cys55/Cys72, Cys80/Cys94, Cys88/Cys111, Cys113/Cys132, and Cys121/Cys157. Residues 105–159 (GRPLGTCGCPAAGATVCGSDGRTYRSLCALRAENRAARLRGALPAVPVQKGDCGD) form the Kazal-like domain. The segment at 209–369 (ASGFIVSEDG…IPSDRIRQFL (161 aa)) is serine protease. Active-site charge relay system residues include His225, Asp255, and Ser333. The PDZ domain maps to 390–472 (LRMLPLTMNL…LSLLVRRKSQ (83 aa)).

It belongs to the peptidase S1C family.

The protein localises to the secreted. Serine protease. This Bos taurus (Bovine) protein is Serine protease HTR4 (HTRA4).